Consider the following 125-residue polypeptide: Larval cuticle protein LCP-14 (125 aa).

A signal peptide spans 1–16 (MKSFIVALCVVGCVLA). The Chitin-binding type R&amp;R domain maps to 33–102 (EGSYNYAFES…PQADFLPTPP (70 aa)).

Its function is as follows. Component of the cuticle of the larva of tobacco hornworm. The chain is Larval cuticle protein LCP-14 (LCP-14) from Manduca sexta (Tobacco hawkmoth).